A 332-amino-acid chain; its full sequence is Ferredoxin--NADP reductase (332 aa).

7 residues coordinate FAD: Asp-33, Gln-41, Tyr-46, Ala-86, Phe-120, Asp-286, and Thr-327.

Belongs to the ferredoxin--NADP reductase type 2 family. As to quaternary structure, homodimer. The cofactor is FAD.

It catalyses the reaction 2 reduced [2Fe-2S]-[ferredoxin] + NADP(+) + H(+) = 2 oxidized [2Fe-2S]-[ferredoxin] + NADPH. The protein is Ferredoxin--NADP reductase of Rickettsia bellii (strain OSU 85-389).